A 281-amino-acid polypeptide reads, in one-letter code: Undecaprenyl-diphosphatase (281 aa).

7 helical membrane-spanning segments follow: residues 45–65 (AFTN…VVVI), 86–106 (WQLW…GLIF), 114–134 (FQNF…FIYV), 148–168 (LVSL…LSLI), 196–216 (FFLG…KFIV), 224–244 (SQLF…LYVI), and 256–276 (FTFF…YGLM).

It belongs to the UppP family.

The protein resides in the cell membrane. It catalyses the reaction di-trans,octa-cis-undecaprenyl diphosphate + H2O = di-trans,octa-cis-undecaprenyl phosphate + phosphate + H(+). In terms of biological role, catalyzes the dephosphorylation of undecaprenyl diphosphate (UPP). Confers resistance to bacitracin. In Streptococcus mutans serotype c (strain ATCC 700610 / UA159), this protein is Undecaprenyl-diphosphatase.